The chain runs to 1003 residues: Glycine--tRNA ligase (1003 aa).

Residues 1 to 310 (MSSQPLTLQT…VTPKKIPTIC (310 aa)) are glycine--tRNA ligase alpha subunit. The interval 311-1003 (QPEDFLLEIG…CFGFYAWGVL (693 aa)) is glycine--tRNA ligase beta subunit.

It belongs to the class-II aminoacyl-tRNA synthetase family.

It is found in the cytoplasm. It catalyses the reaction tRNA(Gly) + glycine + ATP = glycyl-tRNA(Gly) + AMP + diphosphate. This is Glycine--tRNA ligase (glyQS) from Chlamydia trachomatis serovar D (strain ATCC VR-885 / DSM 19411 / UW-3/Cx).